Reading from the N-terminus, the 266-residue chain is 3',5'-cyclic-nucleotide phosphodiesterase alr5338 (266 aa).

Residues Asp14, His16, Asp56, Asn86, His155, His194, and His196 each coordinate Fe cation. Residues His16, Asp56, and 86-87 (NH) each bind AMP. His196 is a binding site for AMP.

The protein belongs to the cyclic nucleotide phosphodiesterase class-III family. Fe(2+) is required as a cofactor. Requires Mn(2+) as cofactor.

It carries out the reaction a nucleoside 3',5'-cyclic phosphate + H2O = a nucleoside 5'-phosphate + H(+). It catalyses the reaction 3',5'-cyclic AMP + H2O = AMP + H(+). The enzyme catalyses 3',5'-cyclic GMP + H2O = GMP + H(+). Activated by iron and manganese. Its function is as follows. Hydrolyzes cAMP to 5'-AMP. Plays an important regulatory role in modulating the intracellular concentration of cAMP, thereby influencing cAMP-dependent processes. Can also hydrolyze cGMP. This is 3',5'-cyclic-nucleotide phosphodiesterase alr5338 from Nostoc sp. (strain PCC 7120 / SAG 25.82 / UTEX 2576).